The primary structure comprises 329 residues: Alpha-tubulin N-acetyltransferase 1 (329 aa).

Positions 5-185 constitute an N-acetyltransferase domain; the sequence is SQVALLPKLS…NNFVVFHRYF (181 aa). Acetyl-CoA-binding positions include 119-132 and 155-164; these read FFVDTSFQRKGFGK and SVKFLAFLQK. Disordered stretches follow at residues 218-261 and 306-329; these read PKYQ…GVGK and GARRRMSPTRSGVQYNIISGTPEH. Positions 220–229 are enriched in polar residues; it reads YQSTTGPNNN. Residues 238 to 249 show a composition bias toward pro residues; the sequence is TPPPPPLPPPLV. The segment covering 313-329 has biased composition (polar residues); it reads PTRSGVQYNIISGTPEH.

This sequence belongs to the acetyltransferase ATAT1 family.

The catalysed reaction is L-lysyl-[alpha-tubulin] + acetyl-CoA = N(6)-acetyl-L-lysyl-[alpha-tubulin] + CoA + H(+). In terms of biological role, specifically acetylates 'Lys-40' in alpha-tubulin on the lumenal side of microtubules. Promotes microtubule destabilization and accelerates microtubule dynamics; this activity may be independent of acetylation activity. Acetylates alpha-tubulin with a slow enzymatic rate, due to a catalytic site that is not optimized for acetyl transfer. Enters the microtubule through each end and diffuses quickly throughout the lumen of microtubules. Acetylates only long/old microtubules because of its slow acetylation rate since it does not have time to act on dynamically unstable microtubules before the enzyme is released. The sequence is that of Alpha-tubulin N-acetyltransferase 1 from Trypanosoma cruzi (strain CL Brener).